A 65-amino-acid polypeptide reads, in one-letter code: MDAFTDFSILADGLASLGDESSHTILAEFSPSILDGPFVADSAPLTEAPCNHDQIADYGSYCVVA.

Cysteine methyl ester is present on Cys62. Cys62 is lipidated: S-farnesyl cysteine. A propeptide spans 63–65 (removed in mature form); the sequence is VVA.

It is found in the cell membrane. Its function is as follows. Activates B-regulated development. This is Mating-type pheromone BBP1(2) (BBP1(2)) from Schizophyllum commune (Split gill fungus).